Consider the following 461-residue polypeptide: Armadillo repeat-containing X-linked protein 1 (461 aa).

Residues 1–6 (MGRTRE) lie on the Mitochondrial intermembrane side of the membrane. 2 mitochondrion outer membrane (MOM)-targeting sequence regions span residues 1–6 (MGRTRE) and 26–36 (RLTWGKDENEK). A helical; Signal-anchor membrane pass occupies residues 7-29 (AGCVAAGMVIGAGACYCVYRLTW). At 30-461 (GKDENEKLWD…VKVLKVLTKL (432 aa)) the chain is on the cytoplasmic side. Disordered stretches follow at residues 34–110 (NEKL…HSEG) and 148–192 (SSLP…PATA). Acidic residues predominate over residues 38-51 (WDDEDEEEEEEEES). Residues 96-110 (PDVKKEVYPESHSEG) show a composition bias toward basic and acidic residues. Over residues 167–185 (SRARNRTSGKVKRKNRSKS) the composition is skewed to basic residues. 4 ARM repeats span residues 203–243 (PYKI…NNAA), 245–284 (SFNQ…NLSV), 366–406 (PAMT…NIND), and 423–461 (SSLF…LTKL).

Belongs to the eutherian X-chromosome-specific Armcx family. As to quaternary structure, interacts with MIRO1.

It localises to the mitochondrion. The protein resides in the mitochondrion outer membrane. In terms of biological role, regulates mitochondrial transport during axon regeneration. Increases the proportion of motile mitochondria by recruiting stationary mitochondria into the motile pool. Enhances mitochondria movement and neurite growth in both adult axons and embryonic neurons. Promotes neuronal survival and axon regeneration after nerve injury. May link mitochondria to the Trak1-kinesin motor complex via its interaction with MIRO1. This chain is Armadillo repeat-containing X-linked protein 1 (Armcx1), found in Rattus norvegicus (Rat).